A 21-amino-acid polypeptide reads, in one-letter code: Neuropeptide gamma (21 aa).

Residues 1–21 (SSANPQITRKRHKINSFVGLM) form a disordered region. A Methionine amide modification is found at Met21.

It belongs to the tachykinin family.

It localises to the secreted. Functionally, tachykinins are active peptides which excite neurons, evoke behavioral responses, and contract (directly or indirectly) many smooth muscles. Is a potent vasoconstrictor and secretagogue that plays a regulatory role in the central control of ventilation, in particular, the heart rate variability (HRV). This chain is Neuropeptide gamma, found in Oncorhynchus mykiss (Rainbow trout).